A 320-amino-acid chain; its full sequence is Ferrochelatase (320 aa).

2 residues coordinate Fe cation: His194 and Glu275.

It belongs to the ferrochelatase family.

It is found in the cytoplasm. The enzyme catalyses heme b + 2 H(+) = protoporphyrin IX + Fe(2+). It functions in the pathway porphyrin-containing compound metabolism; protoheme biosynthesis; protoheme from protoporphyrin-IX: step 1/1. Its function is as follows. Catalyzes the ferrous insertion into protoporphyrin IX. In Pectobacterium atrosepticum (strain SCRI 1043 / ATCC BAA-672) (Erwinia carotovora subsp. atroseptica), this protein is Ferrochelatase.